Reading from the N-terminus, the 356-residue chain is S-adenosylmethionine:tRNA ribosyltransferase-isomerase (356 aa).

Belongs to the QueA family. Monomer.

The protein resides in the cytoplasm. The catalysed reaction is 7-aminomethyl-7-carbaguanosine(34) in tRNA + S-adenosyl-L-methionine = epoxyqueuosine(34) in tRNA + adenine + L-methionine + 2 H(+). It participates in tRNA modification; tRNA-queuosine biosynthesis. Its function is as follows. Transfers and isomerizes the ribose moiety from AdoMet to the 7-aminomethyl group of 7-deazaguanine (preQ1-tRNA) to give epoxyqueuosine (oQ-tRNA). The chain is S-adenosylmethionine:tRNA ribosyltransferase-isomerase from Escherichia coli O6:H1 (strain CFT073 / ATCC 700928 / UPEC).